Reading from the N-terminus, the 259-residue chain is Ribonuclease PH (259 aa).

Phosphate contacts are provided by residues Arg-88 and 126-128 (GTR).

Belongs to the RNase PH family. As to quaternary structure, homohexameric ring arranged as a trimer of dimers.

It carries out the reaction tRNA(n+1) + phosphate = tRNA(n) + a ribonucleoside 5'-diphosphate. In terms of biological role, phosphorolytic 3'-5' exoribonuclease that plays an important role in tRNA 3'-end maturation. Removes nucleotide residues following the 3'-CCA terminus of tRNAs; can also add nucleotides to the ends of RNA molecules by using nucleoside diphosphates as substrates, but this may not be physiologically important. Probably plays a role in initiation of 16S rRNA degradation (leading to ribosome degradation) during starvation. This chain is Ribonuclease PH, found in Mycobacterium bovis (strain BCG / Pasteur 1173P2).